A 1809-amino-acid chain; its full sequence is Pyochelin synthetase PchF (1809 aa).

A condensation/cyclization region spans residues F69 to P490. Residues F520–R915 form an adenylation region. Residues A1407–P1488 form the Carrier domain. S1442 is modified (O-(pantetheine 4'-phosphoryl)serine). Positions L1584–Q1797 are thioesterase.

It belongs to the NRP synthetase family. Pantetheine 4'-phosphate is required as a cofactor.

The catalysed reaction is holo-[peptidyl-carrier protein] + L-cysteine + ATP = L-cysteinyl-[peptidyl-carrier protein] + AMP + diphosphate. It participates in siderophore biosynthesis. Functionally, involved in the biosynthesis of the siderophore pyochelin. Adenylates L-cysteine and loads it onto its peptidyl carrier domain via a thioester linkage to the phosphopanthetheine moiety. Then forms a peptide bond between the salicyl-thiazolinyl intermediate bound to the second carrier domain of PchE and the cysteine bound to its own peptidyl carrier domain to form the salicyl-thiazolinyl-cysteinyl-S-PCP2 intermediate. It subsequently cyclizes the C-terminal cysteine to form the second thiazoline heterocycle in the salicyl-thiazolinyl-thiazolinyl-S-PCP2 intermediate. When this intermediate is released by the action of a thioesterase, it produces the tricyclic acid hydroxyphenyl-thiazolyl-thiazolinyl-carboxylic acid (HPTT-COOH), an advanced intermediate containing the aryl-4,2-bis-heterocyclic skeleton of the bithiazoline class of siderophores. The chain is Pyochelin synthetase PchF from Pseudomonas aeruginosa (strain UCBPP-PA14).